The sequence spans 283 residues: Shikimate kinase (283 aa).

86 to 96 (PIKSGLSSSSA) contacts ATP.

The protein belongs to the GHMP kinase family. Archaeal shikimate kinase subfamily.

Its subcellular location is the cytoplasm. The catalysed reaction is shikimate + ATP = 3-phosphoshikimate + ADP + H(+). The protein operates within metabolic intermediate biosynthesis; chorismate biosynthesis; chorismate from D-erythrose 4-phosphate and phosphoenolpyruvate: step 5/7. This chain is Shikimate kinase, found in Methanococcus maripaludis (strain C5 / ATCC BAA-1333).